The chain runs to 1137 residues: Phytochrome C (1137 aa).

Residues 1 to 18 (MSSSRSNNRATCSRSSSA) are compositionally biased toward low complexity. Positions 1–27 (MSSSRSNNRATCSRSSSARSKHSARVV) are disordered. The region spanning 217–400 (NLSLLCDVLV…VFGIQINKEV (184 aa)) is the GAF domain. Residue Cys322 coordinates phytochromobilin. PAS domains lie at 620-690 (VTNE…LQGI) and 750-824 (IQGD…TKLS). One can recognise a Histidine kinase domain in the interval 904-1124 (YIRQELRNPL…IVLVEFPVAQ (221 aa)).

The protein belongs to the phytochrome family. Homodimer. In terms of processing, contains one covalently linked phytochromobilin chromophore.

Regulatory photoreceptor which exists in two forms that are reversibly interconvertible by light: the Pr form that absorbs maximally in the red region of the spectrum and the Pfr form that absorbs maximally in the far-red region. Photoconversion of Pr to Pfr induces an array of morphogenic responses, whereas reconversion of Pfr to Pr cancels the induction of those responses. Pfr controls the expression of a number of nuclear genes including those encoding the small subunit of ribulose-bisphosphate carboxylase, chlorophyll A/B binding protein, protochlorophyllide reductase, rRNA, etc. It also controls the expression of its own gene(s) in a negative feedback fashion. This is Phytochrome C (PHYC) from Oryza sativa subsp. indica (Rice).